We begin with the raw amino-acid sequence, 95 residues long: Aspartyl/glutamyl-tRNA(Asn/Gln) amidotransferase subunit C (95 aa).

It belongs to the GatC family. In terms of assembly, heterotrimer of A, B and C subunits.

It carries out the reaction L-glutamyl-tRNA(Gln) + L-glutamine + ATP + H2O = L-glutaminyl-tRNA(Gln) + L-glutamate + ADP + phosphate + H(+). The catalysed reaction is L-aspartyl-tRNA(Asn) + L-glutamine + ATP + H2O = L-asparaginyl-tRNA(Asn) + L-glutamate + ADP + phosphate + 2 H(+). Functionally, allows the formation of correctly charged Asn-tRNA(Asn) or Gln-tRNA(Gln) through the transamidation of misacylated Asp-tRNA(Asn) or Glu-tRNA(Gln) in organisms which lack either or both of asparaginyl-tRNA or glutaminyl-tRNA synthetases. The reaction takes place in the presence of glutamine and ATP through an activated phospho-Asp-tRNA(Asn) or phospho-Glu-tRNA(Gln). This Vesicomyosocius okutanii subsp. Calyptogena okutanii (strain HA) protein is Aspartyl/glutamyl-tRNA(Asn/Gln) amidotransferase subunit C.